Reading from the N-terminus, the 276-residue chain is Ribosomal RNA small subunit methyltransferase A (276 aa).

S-adenosyl-L-methionine contacts are provided by Asn-28, Leu-30, Gly-55, Glu-77, Asp-103, and Asn-124.

It belongs to the class I-like SAM-binding methyltransferase superfamily. rRNA adenine N(6)-methyltransferase family. RsmA subfamily.

The protein resides in the cytoplasm. It catalyses the reaction adenosine(1518)/adenosine(1519) in 16S rRNA + 4 S-adenosyl-L-methionine = N(6)-dimethyladenosine(1518)/N(6)-dimethyladenosine(1519) in 16S rRNA + 4 S-adenosyl-L-homocysteine + 4 H(+). Specifically dimethylates two adjacent adenosines (A1518 and A1519) in the loop of a conserved hairpin near the 3'-end of 16S rRNA in the 30S particle. May play a critical role in biogenesis of 30S subunits. The chain is Ribosomal RNA small subunit methyltransferase A from Agrobacterium fabrum (strain C58 / ATCC 33970) (Agrobacterium tumefaciens (strain C58)).